Consider the following 693-residue polypeptide: Polyphosphate kinase (693 aa).

Position 57 (N57) interacts with ATP. Positions 383 and 413 each coordinate Mg(2+). Residue H443 is the Phosphohistidine intermediate of the active site. 3 residues coordinate ATP: Y476, R572, and H601.

This sequence belongs to the polyphosphate kinase 1 (PPK1) family. It depends on Mg(2+) as a cofactor. An intermediate of this reaction is the autophosphorylated ppk in which a phosphate is covalently linked to a histidine residue through a N-P bond.

The catalysed reaction is [phosphate](n) + ATP = [phosphate](n+1) + ADP. Functionally, catalyzes the reversible transfer of the terminal phosphate of ATP to form a long-chain polyphosphate (polyP). The sequence is that of Polyphosphate kinase from Acinetobacter baumannii (strain ATCC 17978 / DSM 105126 / CIP 53.77 / LMG 1025 / NCDC KC755 / 5377).